The chain runs to 229 residues: Cytidylate kinase (229 aa).

12–20 (GPSGTGKSS) contributes to the ATP binding site.

It belongs to the cytidylate kinase family. Type 1 subfamily.

It localises to the cytoplasm. The enzyme catalyses CMP + ATP = CDP + ADP. It catalyses the reaction dCMP + ATP = dCDP + ADP. The polypeptide is Cytidylate kinase (Rhodococcus jostii (strain RHA1)).